A 365-amino-acid chain; its full sequence is UPF0283 membrane protein Avi_2471 (365 aa).

Over residues 1–10 the composition is skewed to basic and acidic residues; the sequence is MSKAPEDQRP. Residues 1–47 form a disordered region; sequence MSKAPEDQRPMPRRPAAFSLEEPSSSPARPPFAEAQEPQRRAPKSFD. Transmembrane regions (helical) follow at residues 83 to 103 and 117 to 137; these read FGKL…GLWI and LGYT…VVVI.

Belongs to the UPF0283 family.

It is found in the cell inner membrane. This Allorhizobium ampelinum (strain ATCC BAA-846 / DSM 112012 / S4) (Agrobacterium vitis (strain S4)) protein is UPF0283 membrane protein Avi_2471.